Consider the following 347-residue polypeptide: NADH-ubiquinone oxidoreductase chain 2 (347 aa).

The next 10 helical transmembrane spans lie at 1–21, 25–45, 59–79, 111–131, 149–169, 178–198, 201–221, 237–257, 276–296, and 326–346; these read MNPL…AIVA, HWLM…PILM, YFLT…MNLV, FHFW…LILL, INLD…GWGG, IMAY…AYNP, TLLN…MFML, MPLL…LPPL, VILP…YMRL, and LSPL…LALL.

Belongs to the complex I subunit 2 family. As to quaternary structure, core subunit of respiratory chain NADH dehydrogenase (Complex I) which is composed of 45 different subunits. Interacts with TMEM242.

The protein localises to the mitochondrion inner membrane. The catalysed reaction is a ubiquinone + NADH + 5 H(+)(in) = a ubiquinol + NAD(+) + 4 H(+)(out). Core subunit of the mitochondrial membrane respiratory chain NADH dehydrogenase (Complex I) which catalyzes electron transfer from NADH through the respiratory chain, using ubiquinone as an electron acceptor. Essential for the catalytic activity and assembly of complex I. In Pteropus pumilus (Little golden-mantled flying fox), this protein is NADH-ubiquinone oxidoreductase chain 2.